The chain runs to 100 residues: NADH-quinone oxidoreductase subunit K (100 aa).

3 helical membrane-spanning segments follow: residues 4 to 24, 28 to 48, and 60 to 80; these read LQHGLILAAILFVLGLTGLLI, LLFMLISLEIMINAAALAFVV, and VMYILAITLAAAEASIGLALL.

Belongs to the complex I subunit 4L family. NDH-1 is composed of 13 different subunits. Subunits NuoA, H, J, K, L, M, N constitute the membrane sector of the complex.

It is found in the cell inner membrane. It catalyses the reaction a quinone + NADH + 5 H(+)(in) = a quinol + NAD(+) + 4 H(+)(out). Its function is as follows. NDH-1 shuttles electrons from NADH, via FMN and iron-sulfur (Fe-S) centers, to quinones in the respiratory chain. The immediate electron acceptor for the enzyme in this species is believed to be ubiquinone. Couples the redox reaction to proton translocation (for every two electrons transferred, four hydrogen ions are translocated across the cytoplasmic membrane), and thus conserves the redox energy in a proton gradient. The sequence is that of NADH-quinone oxidoreductase subunit K from Pectobacterium carotovorum subsp. carotovorum (strain PC1).